The primary structure comprises 131 residues: MYNFDYSKLPIKNIQKIFPIAGGYVNLSFSVDASNKKYFLKLQPNTKSNFFDYELSSLKELTDKNIPVPQIINKGELDNNSFLLLEFIENGHAYPESYRKLGKIVANMHKNINSLNLFGFSHNFNGGTIEF.

This is an uncharacterized protein from Staphylococcus aureus.